The primary structure comprises 245 residues: UPF0280 protein UNCMA_16740 (245 aa).

The protein belongs to the UPF0280 family.

The chain is UPF0280 protein UNCMA_16740 from Methanocella arvoryzae (strain DSM 22066 / NBRC 105507 / MRE50).